The following is a 708-amino-acid chain: Wall-associated receptor kinase-like 14 (708 aa).

A signal peptide spans 1 to 42; that stretch reads MLRSIFDFNQRSTKMVMISHKLDLILVFIIVIGGSIFRRVSA. Residues Asn43, Asn88, Asn101, Asn131, Asn158, Asn167, and Asn184 are each glycosylated (N-linked (GlcNAc...) asparagine). Residues 43-285 lie on the Extracellular side of the membrane; sequence NFTVPCNGRC…WRHCRSNLIT (243 aa). Residues 286-306 traverse the membrane as a helical segment; it reads IVGGTVGGAFLLAALAFFFFC. The Cytoplasmic segment spans residues 307–708; the sequence is KRRRSTPLRS…TNTLLGNIPR (402 aa). A Protein kinase domain is found at 348-629; that stretch reads FSEKQKLGIG…LEQIRLSGWI (282 aa). ATP is bound by residues 354–362 and Lys376; that span reads LGIGAYGTV. The Proton acceptor role is filled by Asp472. 2 disordered regions span residues 636–659 and 686–708; these read SPAG…SIGS and VQDP…NIPR. A compositionally biased stretch (basic and acidic residues) spans 643-652; the sequence is SSDRGSERSV. A compositionally biased stretch (polar residues) spans 692-708; that stretch reads SAQSSPSTNTLLGNIPR.

It belongs to the protein kinase superfamily. Ser/Thr protein kinase family.

Its subcellular location is the membrane. It carries out the reaction L-seryl-[protein] + ATP = O-phospho-L-seryl-[protein] + ADP + H(+). The enzyme catalyses L-threonyl-[protein] + ATP = O-phospho-L-threonyl-[protein] + ADP + H(+). Functionally, serine/threonine-protein kinase that may function as a signaling receptor of extracellular matrix component. This chain is Wall-associated receptor kinase-like 14 (WAKL14), found in Arabidopsis thaliana (Mouse-ear cress).